A 169-amino-acid polypeptide reads, in one-letter code: Succinate dehydrogenase cytochrome b560 subunit, mitochondrial (169 aa).

A mitochondrion-targeting transit peptide spans 1–29 (MAALLLRHVGRHCLRAHFSPQLCIRNAVP). Residues 30-65 (LGTTAKEEMERFWNKNIGSNRPLSPHITIYSWSLPM) lie on the Mitochondrial matrix side of the membrane. The helical transmembrane segment at 66–90 (AMSICHRGTGIALSAGVSLFGMSAL) threads the bilayer. Topologically, residues 91–110 (LLPGNFESYLELVKSLCLGP) are mitochondrial intermembrane. A helical membrane pass occupies residues 111–139 (ALIHTAKFALVFPLMYHTWNGIRHLMWDL). His-127 serves as a coordination point for heme b. Topologically, residues 140–146 (GKGLKIP) are mitochondrial matrix. A helical transmembrane segment spans residues 147-167 (QLYQSGVVVLVLTVLSSMGLA). The Mitochondrial intermembrane segment spans residues 168–169 (AM).

It belongs to the cytochrome b560 family. In terms of assembly, component of complex II composed of four subunits: the flavoprotein (FP) SDHA, iron-sulfur protein (IP) SDHB, and a cytochrome b560 composed of SDHC and SDHD. Requires heme b as cofactor.

It is found in the mitochondrion inner membrane. Its pathway is carbohydrate metabolism; tricarboxylic acid cycle. Membrane-anchoring subunit of succinate dehydrogenase (SDH) that is involved in complex II of the mitochondrial electron transport chain and is responsible for transferring electrons from succinate to ubiquinone (coenzyme Q). SDH also oxidizes malate to the non-canonical enol form of oxaloacetate, enol-oxaloacetate. Enol-oxaloacetate, which is a potent inhibitor of the succinate dehydrogenase activity, is further isomerized into keto-oxaloacetate. The chain is Succinate dehydrogenase cytochrome b560 subunit, mitochondrial (SDHC) from Homo sapiens (Human).